The following is a 1013-amino-acid chain: Nucleotide-binding oligomerization domain-containing protein 2 (1013 aa).

CARD domains lie at 1-82 and 107-178; these read MCSQ…AVQE and LQSH…HVQK. The ATG16L1-binding motif signature appears at 36-50; it reads WEVLSWEDYEGLRLV. Positions 212, 225, 226, 275, 276, 277, 278, 279, and 280 each coordinate ADP. The tract at residues 214–247 is required for CARD9 binding; that stretch reads DGAENLCLEDIYTENTLEVRTEVGMAGPLHKSPA. The region spanning 266–402 is the NACHT domain; it reads DTVLVVGEAG…RKVLTSRPDA (137 aa). 272 to 279 contributes to the ATP binding site; the sequence is GEAGSGKS. Residue cysteine 368 is the site of S-palmitoyl cysteine attachment. Histidine 576 is an ADP binding site. LRR repeat units lie at residues 764–785, 789–812, 817–838, 845–857, 873–893, 901–922, 929–949, 957–978, and 985–1005; these read RPVA…QLLP, ACKA…IEHA, QLQK…SVAQ, NFLA…NHIT, SLQF…QALA, SLKW…ALAS, ALEE…CSLA, SLKV…ALLQ, and TILE…EALS.

It belongs to the NOD1-NOD2 family. As to quaternary structure, homooligomer: homooligomerizes following muramyl dipeptide (MDP)-binding, promoting RIPK2 recruitment. Interacts (via CARD domain) with RIPK2 (via CARD domain). Following RIPK2 recruitment, RIPK2 homooligomerizes via its CARD domain and forms long filaments named RIPosomes. Interacts (via CARD domain) with ubiquitin; inhibiting interaction with RIPK2. Component of a signaling complex consisting of ARHGEF2, NOD2 and RIPK2. Interacts with ANKRD17 (via N-terminus). Interacts with HSPA1A; the interaction enhances NOD2 stability. Interacts (via both CARD domains) with HSP90; the interaction enhances NOD2 stability. Interacts (via CARD domain) with SOCS3; the interaction promotes NOD2 degradation. Interacts (via CARD domain) with ERBIN; the interaction inhibits activation of NOD2. Interacts with MAPKBP1; the interaction is enhanced in the presence of muramyl dipeptide (MDP) and inhibits NOD2 homooligomerization and activation. Interacts with INAVA; the interaction takes place upon Pattern recognition receptor (PRR) stimulation. Interacts (via NACHT domain) with CARD9. Interacts (via CARD domain) with CASP1; this interaction leads to IL1B processing. Also interacts with CASP4. Interacts with NLRP1; this interaction is enhanced in the presence of muramyl dipeptide (MDP) and leads to increased IL1B release. Interacts with NLRP12; this interaction promotes degradation of NOD2 through the ubiquitin-proteasome pathway. Interacts with ANKHD1, C10orf67, CHMP5, DOCK7, ENTR1, KRT15, LDOC1, PPP1R12C, PPP2R3B, TRIM41 and VIM. Interacts with MAVS; interaction takes place following single-stranded RNA (ssRNA)-binding. Interacts with ATG16L1. Interacts with IRGM; promoting IRGM 'Lys-63'-linked polyubiquitination, which is required for interactions with the core autophagy factors. Post-translationally, palmitoylated by ZDHHC5; palmitoylation is required for proper recruitment to the bacterial entry site and hence for proper signaling upon cognate peptidoglycan detection. Palmitoylation promotes localization to the cell membrane. Palmitoylation protects from SQSTM1/p62-dependent autophagic degradation. In terms of processing, polyubiquitinated by TRIM27, leading to proteasome-mediated degradation. Polyubiquitinated and degraded following muramyl dipeptide (MDP) stimulation, conferring MDP tolerance and preventing septic shock. Degraded via selective autophagy following interaction with IRGM. IRGM promotes NOD2-RIPK2 RIPosome recruitment to autophagosome membranes, promoting their SQSTM1/p62-dependent autophagic degradation. Post-translationally, O-glycosylated by OGT, O-GlcNAcylation increases protein stability.

It is found in the cell membrane. It localises to the basolateral cell membrane. The protein localises to the cytoplasm. Its subcellular location is the mitochondrion. ADP-binding promotes an inactive closed conformation. Its function is as follows. Pattern recognition receptor (PRR) that detects bacterial peptidoglycan fragments and other danger signals and plays an important role in gastrointestinal immunity. Specifically activated by muramyl dipeptide (MDP), a fragment of bacterial peptidoglycan found in every bacterial peptidoglycan type. NOD2 specifically recognizes and binds 6-O-phospho-MDP, the phosphorylated form of MDP, which is generated by NAGK. 6-O-phospho-MDP-binding triggers oligomerization that facilitates the binding and subsequent activation of the proximal adapter receptor-interacting RIPK2. Following recruitment, RIPK2 undergoes 'Met-1'- (linear) and 'Lys-63'-linked polyubiquitination by E3 ubiquitin-protein ligases XIAP, BIRC2, BIRC3 and the LUBAC complex, becoming a scaffolding protein for downstream effectors, triggering activation of the NF-kappa-B and MAP kinases signaling. This in turn leads to the transcriptional activation of hundreds of genes involved in immune response. Its ability to detect bacterial MDP plays a central role in maintaining the equilibrium between intestinal microbiota and host immune responses to control inflammation. An imbalance in this relationship results in dysbiosis, whereby pathogenic bacteria prevail on commensals, causing damage in the intestinal epithelial barrier as well as allowing bacterial invasion and inflammation. Acts as a regulator of appetite by sensing MDP in a subset of brain neurons: microbiota-derived MDP reach the brain, where they bind and activate NOD2 in inhibitory hypothalamic neurons, decreasing neuronal activity, thereby regulating satiety and body temperature. NOD2-dependent MDP-sensing of bacterial cell walls in the intestinal epithelial compartment contributes to sustained postnatal growth upon undernutrition. Also plays a role in antiviral response by acting as a sensor of single-stranded RNA (ssRNA) from viruses: upon ssRNA-binding, interacts with MAVS, leading to activation of interferon regulatory factor-3/IRF3 and expression of type I interferon. Also acts as a regulator of autophagy in dendritic cells via its interaction with ATG16L1, possibly by recruiting ATG16L1 at the site of bacterial entry. NOD2 activation in the small intestine crypt also contributes to intestinal stem cells survival and function: acts by promoting mitophagy via its association with ATG16L1. In addition to its main role in innate immunity, also regulates the adaptive immune system by acting as regulator of helper T-cell and regulatory T-cells (Tregs). Besides recognizing pathogens, also involved in the endoplasmic reticulum stress response: acts by sensing and binding to the cytosolic metabolite sphingosine-1-phosphate generated in response to endoplasmic reticulum stress, initiating an inflammation process that leads to activation of the NF-kappa-B and MAP kinases signaling. May also be involved in NLRP1 activation following activation by MDP, leading to CASP1 activation and IL1B release in macrophages. The chain is Nucleotide-binding oligomerization domain-containing protein 2 from Oryctolagus cuniculus (Rabbit).